The sequence spans 22 residues: Major outer membrane protein (22 aa).

It belongs to the Gram-negative porin family. As to quaternary structure, disulfide bond interactions within and between MOMP molecules and other components form high molecular-weight oligomers.

Its subcellular location is the cell outer membrane. Structural rigidity of the outer membrane of elementary bodies and porin forming, permitting diffusion of solutes through the intracellular reticulate body membrane. This is Major outer membrane protein (ompH) from Avibacterium gallinarum (Pasteurella gallinarum).